The sequence spans 148 residues: AYINLPGQPFDFQCPAGQVISRVSSVYDVLLEDRQWEFGCRTENVTQTCSTSGYANDFGLPLSYSCPGKKVLTGIRSYHDNQIEDRRFTFRCCDVMSKATTGCHVSEQVNQFNGPMLLEVSAGQAIKGAISQHDVAFEDRVWKFKLCK.

Cysteines 14 and 40 form a disulfide. N-linked (GlcNAc...) asparagine glycosylation occurs at Asn-44. Cystine bridges form between Cys-66-Cys-93 and Cys-103-Cys-147.

It belongs to the dermatopontin family. Post-translationally, the terminal mannose residues of the polysaccharide are 3-O-methylated. No tyrosine sulfation was detected.

It localises to the secreted. The protein localises to the extracellular space. It is found in the extracellular matrix. Seems to mediate adhesion by cell surface integrin binding. This chain is Dermatopontin, found in Biomphalaria glabrata (Bloodfluke planorb).